Reading from the N-terminus, the 180-residue chain is tRNA (cytidine(56)-2'-O)-methyltransferase (180 aa).

Residues Leu-84 and 112-116 (GAEKV) each bind S-adenosyl-L-methionine.

This sequence belongs to the aTrm56 family. As to quaternary structure, homodimer.

It localises to the cytoplasm. It catalyses the reaction cytidine(56) in tRNA + S-adenosyl-L-methionine = 2'-O-methylcytidine(56) in tRNA + S-adenosyl-L-homocysteine + H(+). Specifically catalyzes the AdoMet-dependent 2'-O-ribose methylation of cytidine at position 56 in tRNAs. The sequence is that of tRNA (cytidine(56)-2'-O)-methyltransferase from Haloarcula marismortui (strain ATCC 43049 / DSM 3752 / JCM 8966 / VKM B-1809) (Halobacterium marismortui).